Reading from the N-terminus, the 440-residue chain is Glycerol-3-phosphate dehydrogenase [NAD(+)], chloroplastic (440 aa).

The N-terminal 47 residues, 1-47 (MAAAAAATFLPHTPTPRRRLAVAVHSPTRRRLSLVFSGPPDGALSVA), are a transit peptide targeting the chloroplast. The tract at residues 57 to 76 (EEAAAAVSAPRGGGGGGGKE) is disordered. NAD(+) is bound by residues 114–119 (GGGSFG), F191, K214, and A248. K214 lines the substrate pocket. K299 functions as the Proton acceptor in the catalytic mechanism. NAD(+) contacts are provided by R363 and E389. Residue 363-364 (RN) participates in substrate binding.

Belongs to the NAD-dependent glycerol-3-phosphate dehydrogenase family.

The protein localises to the plastid. The protein resides in the chloroplast. It carries out the reaction sn-glycerol 3-phosphate + NAD(+) = dihydroxyacetone phosphate + NADH + H(+). The protein operates within membrane lipid metabolism; glycerophospholipid metabolism. Functionally, required to supply glycerol-3-phosphate in the chloroplast for the synthesis of glycerolipids. This chain is Glycerol-3-phosphate dehydrogenase [NAD(+)], chloroplastic, found in Oryza sativa subsp. japonica (Rice).